A 182-amino-acid chain; its full sequence is Adenine phosphoribosyltransferase (182 aa).

This sequence belongs to the purine/pyrimidine phosphoribosyltransferase family. In terms of assembly, homodimer.

It is found in the cytoplasm. It carries out the reaction AMP + diphosphate = 5-phospho-alpha-D-ribose 1-diphosphate + adenine. The protein operates within purine metabolism; AMP biosynthesis via salvage pathway; AMP from adenine: step 1/1. In terms of biological role, catalyzes a salvage reaction resulting in the formation of AMP, that is energically less costly than de novo synthesis. The polypeptide is Adenine phosphoribosyltransferase (Campylobacter jejuni subsp. jejuni serotype O:2 (strain ATCC 700819 / NCTC 11168)).